Reading from the N-terminus, the 233-residue chain is Large ribosomal subunit protein uL1 (233 aa).

Belongs to the universal ribosomal protein uL1 family. Part of the 50S ribosomal subunit.

Binds directly to 23S rRNA. The L1 stalk is quite mobile in the ribosome, and is involved in E site tRNA release. In terms of biological role, protein L1 is also a translational repressor protein, it controls the translation of the L11 operon by binding to its mRNA. In Syntrophotalea carbinolica (strain DSM 2380 / NBRC 103641 / GraBd1) (Pelobacter carbinolicus), this protein is Large ribosomal subunit protein uL1.